The chain runs to 195 residues: HTH-type transcriptional regulator BetI (195 aa).

In terms of domain architecture, HTH tetR-type spans 8–68; it reads PIRRQQLIEA…ATMRYLISHL (61 aa). The H-T-H motif DNA-binding region spans 31 to 50; sequence SIVQIARRAGVSNGIISHYF.

Its pathway is amine and polyamine biosynthesis; betaine biosynthesis via choline pathway [regulation]. Repressor involved in the biosynthesis of the osmoprotectant glycine betaine. It represses transcription of the choline transporter BetT and the genes of BetAB involved in the synthesis of glycine betaine. The polypeptide is HTH-type transcriptional regulator BetI (Pectobacterium atrosepticum (strain SCRI 1043 / ATCC BAA-672) (Erwinia carotovora subsp. atroseptica)).